Reading from the N-terminus, the 78-residue chain is Short neurotoxin SNTX26 (78 aa).

Residues 1–21 (MKTLLLTFLVVTIVCLDLGYT) form the signal peptide. 4 disulfide bridges follow: cysteine 24/cysteine 40, cysteine 33/cysteine 58, cysteine 62/cysteine 70, and cysteine 71/cysteine 76.

The protein belongs to the three-finger toxin family. Short-chain subfamily. Expressed by the venom gland.

It localises to the secreted. This three-finger toxin binds and inhibits the nicotinic acetylcholine receptor (nAChR). In Ophiophagus hannah (King cobra), this protein is Short neurotoxin SNTX26.